Consider the following 230-residue polypeptide: Orotidine 5'-phosphate decarboxylase (230 aa).

Residues Asp-10, Lys-32, 59–68, Thr-119, Arg-180, Gln-189, Gly-209, and Arg-210 contribute to the substrate site; that span reads DLKYHDIPNT. Lys-61 (proton donor) is an active-site residue.

The protein belongs to the OMP decarboxylase family. Type 1 subfamily. As to quaternary structure, homodimer.

It catalyses the reaction orotidine 5'-phosphate + H(+) = UMP + CO2. It functions in the pathway pyrimidine metabolism; UMP biosynthesis via de novo pathway; UMP from orotate: step 2/2. In terms of biological role, catalyzes the decarboxylation of orotidine 5'-monophosphate (OMP) to uridine 5'-monophosphate (UMP). The chain is Orotidine 5'-phosphate decarboxylase from Haemophilus influenzae (strain ATCC 51907 / DSM 11121 / KW20 / Rd).